A 320-amino-acid chain; its full sequence is MARAKIALIGAGMIGGTLAHIAAREELGDILLFDIAEGTPQGKALDIAEASAVFGKDVSLKGVNDYADIAGADVCIVTAGVPRKPGMSRDDLLGINLKVMKAVGEGIKAHAPNAFVICITNPLDAMVWALQQFSGLPKEKVIGMAGVLDSARFAFFLAEKTGVSVEDIHAWTLGGHGDDMVPMVRHSTVGGLPLPELVKQGWLSQEELDGIVKRTRGGGGEIVALLKTGSAFYAPAESAIAMATSYLKDKKRVLPCATFLTGQYGLDGLYVGVPVVIGAGGAEKVIEFETNDEEKAMFAKSVESVKGLMEACKAIDSALV.

NAD(+)-binding positions include Gly10–Gly15 and Asp34. Residues Arg83 and Arg89 each coordinate substrate. NAD(+)-binding positions include Asn96 and Ile119–Asn121. Residues Asn121 and Arg152 each contribute to the substrate site. His176 acts as the Proton acceptor in catalysis.

Belongs to the LDH/MDH superfamily. MDH type 3 family.

It carries out the reaction (S)-malate + NAD(+) = oxaloacetate + NADH + H(+). Its function is as follows. Catalyzes the reversible oxidation of malate to oxaloacetate. The chain is Malate dehydrogenase from Caulobacter sp. (strain K31).